A 210-amino-acid chain; its full sequence is Ribonuclease HII (210 aa).

Positions Gly-18–Leu-210 constitute an RNase H type-2 domain. Residues Asp-24, Glu-25, and Asp-116 each contribute to the a divalent metal cation site.

This sequence belongs to the RNase HII family. Requires Mn(2+) as cofactor. The cofactor is Mg(2+).

The protein localises to the cytoplasm. The catalysed reaction is Endonucleolytic cleavage to 5'-phosphomonoester.. Functionally, endonuclease that specifically degrades the RNA of RNA-DNA hybrids. This Shewanella baltica (strain OS155 / ATCC BAA-1091) protein is Ribonuclease HII.